We begin with the raw amino-acid sequence, 1135 residues long: Envelopment polyprotein (1135 aa).

Residues 1–35 (MRILKLLELVVKVSLFTIALSSVLLAFLTFRATDA) form the signal peptide. The Lumenal segment spans residues 36-314 (KVEIIRGDHP…KYSKSIYKQT (279 aa)). Residues 41 to 43 (RGD) carry the Cell attachment site motif. An N-linked (GlcNAc...) asparagine; by host glycan is attached at N116. Residues C122 and C156 are joined by a disulfide bond. The tract at residues 177–195 (LDNKRHFSVGTNFFIPESL) is non-covalent dimerization. N-linked (GlcNAc...) asparagine; by host glycosylation occurs at N210. C224 and C285 are joined by a disulfide. The chain crosses the membrane as a helical span at residues 315–366 (ACINFSWIRLILIALLIYFPIRWLVNKTTKPLFLWYDLMGLITYPVLLLINC). Topologically, residues 367–484 (LWKYFPFKCS…VPGCPFLVTS (118 aa)) are cytoplasmic. The signal for signal peptide peptidase stretch occupies residues 437-484 (LSLSLLKFVTEILIGLVILSQIPMSMAQTTQCLSGCFYVPGCPFLVTS). Residues 485 to 1067 (KFEKCPEKDQ…YFGSFFDTIR (583 aa)) lie on the Lumenal side of the membrane. N588, N605, and N980 each carry an N-linked (GlcNAc...) asparagine; by host glycan. Residues 1068–1088 (VVLLIAFIFLVIYFCSILTSI) form a helical membrane-spanning segment. Topologically, residues 1089-1135 (CKGYVKHKSYKSRSKIEDDDEPEIKAPMLMKDTMTRRRPPMDFSHLV) are cytoplasmic.

The protein belongs to the tospovirus envelope glycoprotein family. In terms of assembly, homodimer; disulfide-linked. Heterodimer with Glycoprotein C. Interacts with nucleoprotein. As to quaternary structure, heterodimer with Glycoprotein N. Interacts with nucleoprotein. Post-translationally, specific enzymatic cleavages in vivo yield mature proteins including Glycoprotein N and Glycoprotein C. Glycosylated with O-linked glycans. Glycosylation is essential for proper subcellular location. In terms of processing, cleaved at acidic pH.

It localises to the virion membrane. The protein resides in the host Golgi apparatus membrane. Its subcellular location is the host endoplasmic reticulum membrane. Forms the spikes present at the surface of the virion together with Glycoprotein C. They are able to attach the virion to a cell receptor and to promote fusion of membranes after endocytosis of the virion. Plays a role in virus binding and/or entry into the vector midgut. Its function is as follows. Forms the spikes present at the surface of the virion together with Glycoprotein N. They are able to attach the virion to a cell receptor and to promote fusion of membranes after endocytosis of the virion. Probable class II fusion protein. The sequence is that of Envelopment polyprotein (GP) from Frankliniella occidentalis (Western flower thrips).